The following is a 141-amino-acid chain: Large ribosomal subunit protein uL11 (141 aa).

Belongs to the universal ribosomal protein uL11 family. As to quaternary structure, part of the ribosomal stalk of the 50S ribosomal subunit. Interacts with L10 and the large rRNA to form the base of the stalk. L10 forms an elongated spine to which L12 dimers bind in a sequential fashion forming a multimeric L10(L12)X complex. Post-translationally, one or more lysine residues are methylated.

Its function is as follows. Forms part of the ribosomal stalk which helps the ribosome interact with GTP-bound translation factors. This chain is Large ribosomal subunit protein uL11, found in Chlamydia caviae (strain ATCC VR-813 / DSM 19441 / 03DC25 / GPIC) (Chlamydophila caviae).